The sequence spans 144 residues: Large ribosomal subunit protein uL15 (144 aa).

The interval 1 to 53 (MRLNTLSPAEGSKHASKRPGRGIGSGLGKTGGRGHKGQKSRSGGGVRRGFEGG) is disordered. Residues 21–31 (RGIGSGLGKTG) are compositionally biased toward gly residues.

Belongs to the universal ribosomal protein uL15 family. As to quaternary structure, part of the 50S ribosomal subunit.

In terms of biological role, binds to the 23S rRNA. In Sodalis glossinidius (strain morsitans), this protein is Large ribosomal subunit protein uL15.